A 448-amino-acid chain; its full sequence is MAHIKFDYSKLTPFVAENELYEIQWQIDGAAKLLHEGKGAGSDYIGWLDLPEDYDKEEFARIQKAAKKIKSDSEVLIVIGIGGSYLGARAAIDFLSNSFVNLQTAEERKAPRILYAGNSISSSYLADLVDYVADKDFSVNVISKSGTTTEPAIAFRVFEEMLVKKYGREEANKRIYATTDKEKGAVKVNADANNWETFVVPDSVGGRFSVLTAVGLLPIAASGADITALMEGANAARKEYTSTNVHENDAYAYAALRNILYRKGKFSEILINYEPSLQYFSEWWKQLAGESEGKDQKGIYPTSANFSTDLHSLGQWIQEGTRTVFETAIRIEKPRKNINIPELDADLDGLGYLQGKDVDFVNKKAADGVLLAHTDGNVPNMIVTLPEQDEFTLGYAIYFFELAIGVSGYLNGINPFNQPGVEAYKKNMFALLGKPGFEELSKELNDRL.

Glutamate 290 (proton donor) is an active-site residue. Active-site residues include histidine 311 and lysine 425.

The protein belongs to the GPI family.

The protein resides in the cytoplasm. The catalysed reaction is alpha-D-glucose 6-phosphate = beta-D-fructose 6-phosphate. It participates in carbohydrate biosynthesis; gluconeogenesis. It functions in the pathway carbohydrate degradation; glycolysis; D-glyceraldehyde 3-phosphate and glycerone phosphate from D-glucose: step 2/4. Its function is as follows. Catalyzes the reversible isomerization of glucose-6-phosphate to fructose-6-phosphate. The protein is Glucose-6-phosphate isomerase of Lactococcus lactis subsp. cremoris (strain SK11).